The following is a 149-amino-acid chain: Sex-regulated protein janus-A (149 aa).

Lys-46 provides a ligand contact to substrate. The active-site Proton acceptor is the His-77. Position 118–120 (118–120 (STG)) interacts with substrate.

It belongs to the janus family.

In terms of biological role, janA and janB regulate somatic sex differentiation. This chain is Sex-regulated protein janus-A (janA), found in Drosophila pseudoobscura pseudoobscura (Fruit fly).